Consider the following 464-residue polypeptide: ATP synthase subunit beta (464 aa).

153 to 160 lines the ATP pocket; it reads GGAGVGKT.

The protein belongs to the ATPase alpha/beta chains family. F-type ATPases have 2 components, CF(1) - the catalytic core - and CF(0) - the membrane proton channel. CF(1) has five subunits: alpha(3), beta(3), gamma(1), delta(1), epsilon(1). CF(0) has three main subunits: a(1), b(2) and c(9-12). The alpha and beta chains form an alternating ring which encloses part of the gamma chain. CF(1) is attached to CF(0) by a central stalk formed by the gamma and epsilon chains, while a peripheral stalk is formed by the delta and b chains.

It is found in the cell membrane. It catalyses the reaction ATP + H2O + 4 H(+)(in) = ADP + phosphate + 5 H(+)(out). Its function is as follows. Produces ATP from ADP in the presence of a proton gradient across the membrane. The catalytic sites are hosted primarily by the beta subunits. This chain is ATP synthase subunit beta, found in Alkaliphilus oremlandii (strain OhILAs) (Clostridium oremlandii (strain OhILAs)).